Consider the following 220-residue polypeptide: Adenylate kinase (220 aa).

Residue 10 to 15 (GAGKGT) coordinates ATP. Residues 30–59 (STGDMLRAAVKAGTPLGVEAKGYMDAGKLV) are NMP. Residues Thr-31, Arg-36, 57–59 (KLV), 85–88 (GFPR), and Gln-92 each bind AMP. The LID stretch occupies residues 122 to 159 (GRRTHPASGRTYHVKFNPPKVEGHDDVTGEPLIQRDDD). ATP contacts are provided by residues Arg-123 and 132–133 (TY). The AMP site is built by Arg-156 and Arg-167. Gly-206 serves as a coordination point for ATP.

The protein belongs to the adenylate kinase family. As to quaternary structure, monomer.

It is found in the cytoplasm. The enzyme catalyses AMP + ATP = 2 ADP. Its pathway is purine metabolism; AMP biosynthesis via salvage pathway; AMP from ADP: step 1/1. Functionally, catalyzes the reversible transfer of the terminal phosphate group between ATP and AMP. Plays an important role in cellular energy homeostasis and in adenine nucleotide metabolism. The protein is Adenylate kinase of Burkholderia lata (strain ATCC 17760 / DSM 23089 / LMG 22485 / NCIMB 9086 / R18194 / 383).